Here is a 210-residue protein sequence, read N- to C-terminus: Large ribosomal subunit protein uL3 (210 aa).

Belongs to the universal ribosomal protein uL3 family. As to quaternary structure, part of the 50S ribosomal subunit. Forms a cluster with proteins L14 and L19.

One of the primary rRNA binding proteins, it binds directly near the 3'-end of the 23S rRNA, where it nucleates assembly of the 50S subunit. This is Large ribosomal subunit protein uL3 from Geobacter metallireducens (strain ATCC 53774 / DSM 7210 / GS-15).